The sequence spans 657 residues: Threonine--tRNA ligase (657 aa).

Residues serine 7–threonine 70 form the TGS domain. The catalytic stretch occupies residues aspartate 253–proline 555. Residues cysteine 351, histidine 402, and histidine 532 each coordinate Zn(2+).

Belongs to the class-II aminoacyl-tRNA synthetase family. As to quaternary structure, homodimer. Zn(2+) serves as cofactor.

The protein localises to the cytoplasm. It catalyses the reaction tRNA(Thr) + L-threonine + ATP = L-threonyl-tRNA(Thr) + AMP + diphosphate + H(+). In terms of biological role, catalyzes the attachment of threonine to tRNA(Thr) in a two-step reaction: L-threonine is first activated by ATP to form Thr-AMP and then transferred to the acceptor end of tRNA(Thr). Also edits incorrectly charged L-seryl-tRNA(Thr). The chain is Threonine--tRNA ligase from Prosthecochloris aestuarii (strain DSM 271 / SK 413).